Consider the following 530-residue polypeptide: Phosphoenolpyruvate carboxykinase (ATP) (530 aa).

3 residues coordinate substrate: Arg58, Tyr195, and Lys201. ATP contacts are provided by residues Lys201, His220, and 236–244; that span reads GLSGTGKTT. Residues Lys201 and His220 each contribute to the Mn(2+) site. Residue Asp257 participates in Mn(2+) binding. Residues Glu285, Arg321, 440–441, and Thr446 each bind ATP; that span reads RI. Substrate is bound at residue Arg321.

The protein belongs to the phosphoenolpyruvate carboxykinase (ATP) family. The cofactor is Mn(2+).

Its subcellular location is the cytoplasm. The catalysed reaction is oxaloacetate + ATP = phosphoenolpyruvate + ADP + CO2. It functions in the pathway carbohydrate biosynthesis; gluconeogenesis. Involved in the gluconeogenesis. Catalyzes the conversion of oxaloacetate (OAA) to phosphoenolpyruvate (PEP) through direct phosphoryl transfer between the nucleoside triphosphate and OAA. This Staphylococcus aureus (strain bovine RF122 / ET3-1) protein is Phosphoenolpyruvate carboxykinase (ATP).